Consider the following 368-residue polypeptide: UDP-galactose/UDP-N-acetylglucosamine transporter srf-3 (368 aa).

A run of 8 helical transmembrane segments spans residues 72-92 (FVST…CLFL), 118-138 (LKVC…YVAA), 145-165 (TFMI…VIIL), 174-194 (WFAL…GTKA), 203-223 (FVGF…GIYF), 235-254 (LWMR…FSAI), 273-293 (SIVW…AVCI), and 317-337 (IFLF…LVIF).

The protein belongs to the nucleotide-sugar transporter family. SLC35A subfamily. Expressed exclusively in pharyngeal cells g1 and g2, lateral seam cells, spermatheca and vas deferens.

Its subcellular location is the golgi apparatus membrane. Acts as a transporter of both UDP-galactose and UDP-N-acetylglucosamine into the Golgi lumen. Apparently transports UDP-galactose and UDP-N-acetylglucosamine simultaneously, and independently, by an unknown mechanism. Functions redundantly with nucleotide sugar transporter nstp-4. May be involved in gonadal development. This is UDP-galactose/UDP-N-acetylglucosamine transporter srf-3 (srf-3) from Caenorhabditis elegans.